The following is a 122-amino-acid chain: Large ribosomal subunit protein bL12 (122 aa).

It belongs to the bacterial ribosomal protein bL12 family. In terms of assembly, homodimer. Part of the ribosomal stalk of the 50S ribosomal subunit. Forms a multimeric L10(L12)X complex, where L10 forms an elongated spine to which 2 to 4 L12 dimers bind in a sequential fashion. Binds GTP-bound translation factors.

In terms of biological role, forms part of the ribosomal stalk which helps the ribosome interact with GTP-bound translation factors. Is thus essential for accurate translation. The polypeptide is Large ribosomal subunit protein bL12 (Actinobacillus pleuropneumoniae serotype 5b (strain L20)).